The sequence spans 315 residues: Ribosomal RNA small subunit methyltransferase H (315 aa).

The interval 1–21 (MNVVNVVPMHLPPPPPRPRGE) is disordered. Residues 51-53 (GGH), Asp69, Phe96, Asp117, and Gln124 each bind S-adenosyl-L-methionine. The interval 281-315 (KKPVTAGDDEVEGNPRARSAKLRAARRVGGAEALA) is disordered.

The protein belongs to the methyltransferase superfamily. RsmH family.

The protein localises to the cytoplasm. It carries out the reaction cytidine(1402) in 16S rRNA + S-adenosyl-L-methionine = N(4)-methylcytidine(1402) in 16S rRNA + S-adenosyl-L-homocysteine + H(+). Functionally, specifically methylates the N4 position of cytidine in position 1402 (C1402) of 16S rRNA. This Sorangium cellulosum (strain So ce56) (Polyangium cellulosum (strain So ce56)) protein is Ribosomal RNA small subunit methyltransferase H.